Here is a 309-residue protein sequence, read N- to C-terminus: D-alanine--D-alanine ligase (309 aa).

An ATP-grasp domain is found at 109-304 (KMVWAACGLP…FTALCLAILE (196 aa)). Residue 135-190 (VAELGLPIFVKPVHEGSSMGATKVTAASQLKAAWERAARFDDLVLAEEFIVGAELT) coordinates ATP. D258, E271, and N273 together coordinate Mg(2+).

Belongs to the D-alanine--D-alanine ligase family. It depends on Mg(2+) as a cofactor. Mn(2+) is required as a cofactor.

The protein resides in the cytoplasm. It carries out the reaction 2 D-alanine + ATP = D-alanyl-D-alanine + ADP + phosphate + H(+). Its pathway is cell wall biogenesis; peptidoglycan biosynthesis. Cell wall formation. The chain is D-alanine--D-alanine ligase from Aromatoleum aromaticum (strain DSM 19018 / LMG 30748 / EbN1) (Azoarcus sp. (strain EbN1)).